The chain runs to 237 residues: MKEEIAATVVFLTMLVKKHKQLSKQKIEKFAAKLTTILFAKYKNHWYAENPMKGQAFRCIRINTYQAIDAVFEKACAESNVDFNDLGLPKEMTIWVDPFEVCCRYGEKNDPFTIASFKGKDGYNAPKRISHAVEKATSDYYSGTSSDEELTNKEPKTIPKVSNPNSIYQCADYSQAIPSWSQYPRRKNYQNNGYPPNPPMPYYPQQKAYKAFRQSSAFSGPRVDRYHWVNMKRSAIS.

It belongs to the BTG family.

In Xenopus laevis (African clawed frog), this protein is Maternal B9.10 protein.